A 320-amino-acid polypeptide reads, in one-letter code: MLRVFVIFSLFIAAINASGEFTVLNRPKAISFKGNDALESHYVGDVLYASMGNAVSGDTNWNGLTINDPFNLAKGVILVHVQGIGHVTTAGNVKTYELTGSGTDASLNALAAELEAANEPVCDINFEQFDDGVQAWKSCFGDFEAPAAKPTKHLNPSLHTADKQFLQEVGFINSAADHLAEMAKPSNVLMLRVSVDGVAKAHGEKSVAVEEANKLLSAAISRLLAASQKSSDSVLFVQTTEKDVAASRAKRDTIAASTTNPYNLAVYYGSDYPVIFNIILWFMVVFGLSLLAICYAIAAMDPGRDSIIYRMTSTRIKKDN.

The first 17 residues, 1-17, serve as a signal peptide directing secretion; sequence MLRVFVIFSLFIAAINA. Residues 18–277 are Lumenal-facing; sequence SGEFTVLNRP…YGSDYPVIFN (260 aa). The chain crosses the membrane as a helical span at residues 278 to 298; the sequence is IILWFMVVFGLSLLAICYAIA. Topologically, residues 299-320 are cytoplasmic; it reads AMDPGRDSIIYRMTSTRIKKDN. A Mediates retrograde transport to the ER motif is present at residues 317–320; sequence KKDN.

As to quaternary structure, interacts with fz and fz2. Interacts (via N-terminus) with stan. As an accessory component of the multisubunit proton-transporting vacuolar (V)-ATPase protein pump, might interacts with VhaAC45. Post-translationally, proteolytically cleaved by a furin-like convertase in the trans-Golgi network to generate N- and C-terminal fragments. Cleavage is reduced in the fat body.

Its subcellular location is the cell membrane. The protein localises to the endoplasmic reticulum membrane. It localises to the vesicle. The protein resides in the apical cell membrane. It is found in the golgi apparatus membrane. Its subcellular location is the secreted. Its function is as follows. Multifunctional protein which functions as a transmembrane receptor in the planar cell polarity (PCP) and is involved in the assembly of the proton-transporting vacuolar (V)-ATPase protein pump. As transmembrane receptor mediates fz/PCP signaling through interaction with fz and stabilizes asymmetric PCP domains through its interaction with stan. Also mediates Wnt/beta-cat signaling through interaction with fz/fz2. Probably by controlling the assembly of the V-ATPase pump and thus the acidification of the endo-lysosomal system, plays a role in many neuronal processes including synapse morphology and synaptic transmission. Stabilizes asymmetric Planar Cell Polarity (PCP) domains through its interaction with stan. This Drosophila melanogaster (Fruit fly) protein is ATPase H(+)-transporting accessory protein 2.